The primary structure comprises 511 residues: Bifunctional purine biosynthesis protein PurH (511 aa).

The 145-residue stretch at 1–145 (MKKRALVSVS…KNHKFVSVIV (145 aa)) folds into the MGS-like domain.

It belongs to the PurH family.

The catalysed reaction is (6R)-10-formyltetrahydrofolate + 5-amino-1-(5-phospho-beta-D-ribosyl)imidazole-4-carboxamide = 5-formamido-1-(5-phospho-D-ribosyl)imidazole-4-carboxamide + (6S)-5,6,7,8-tetrahydrofolate. It carries out the reaction IMP + H2O = 5-formamido-1-(5-phospho-D-ribosyl)imidazole-4-carboxamide. It functions in the pathway purine metabolism; IMP biosynthesis via de novo pathway; 5-formamido-1-(5-phospho-D-ribosyl)imidazole-4-carboxamide from 5-amino-1-(5-phospho-D-ribosyl)imidazole-4-carboxamide (10-formyl THF route): step 1/1. The protein operates within purine metabolism; IMP biosynthesis via de novo pathway; IMP from 5-formamido-1-(5-phospho-D-ribosyl)imidazole-4-carboxamide: step 1/1. This is Bifunctional purine biosynthesis protein PurH from Bacillus cereus (strain Q1).